Consider the following 903-residue polypeptide: Valine--tRNA ligase (903 aa).

Residues 1-15 (MVCVTDQNNETTSQN) show a composition bias toward polar residues. Positions 1-21 (MVCVTDQNNETTSQNRADKLP) are disordered. The 'HIGH' region motif lies at 61–71 (PNVTGQLHMGH). The 'KMSKS' region motif lies at 552 to 556 (KMSKS). Lysine 555 is a binding site for ATP. The stretch at 836-903 (TVDVAAERKR…RINKRLEELA (68 aa)) forms a coiled coil.

The protein belongs to the class-I aminoacyl-tRNA synthetase family. ValS type 1 subfamily. As to quaternary structure, monomer.

Its subcellular location is the cytoplasm. It catalyses the reaction tRNA(Val) + L-valine + ATP = L-valyl-tRNA(Val) + AMP + diphosphate. In terms of biological role, catalyzes the attachment of valine to tRNA(Val). As ValRS can inadvertently accommodate and process structurally similar amino acids such as threonine, to avoid such errors, it has a 'posttransfer' editing activity that hydrolyzes mischarged Thr-tRNA(Val) in a tRNA-dependent manner. In Corynebacterium glutamicum (strain ATCC 13032 / DSM 20300 / JCM 1318 / BCRC 11384 / CCUG 27702 / LMG 3730 / NBRC 12168 / NCIMB 10025 / NRRL B-2784 / 534), this protein is Valine--tRNA ligase.